The chain runs to 492 residues: NAD(P)H-quinone oxidoreductase subunit 2 A, chloroplastic (492 aa).

The next 13 helical transmembrane spans lie at 6 to 26 (LLLF…GLIL), 39 to 59 (TPWL…ALLF), 81 to 101 (VFQF…VEYI), 106 to 126 (MAIT…MFLC), 131 to 151 (LITI…LSGY), 165 to 185 (YLLM…WLYG), 209 to 229 (PGIS…LSPA), 277 to 297 (WHLL…LIAI), 305 to 325 (MLAY…IVGD), 329 to 349 (GYAS…GTFA), 377 to 397 (ALSS…AGFF), 400 to 420 (LHLF…IGLL), and 466 to 486 (MIVC…IIAI).

Belongs to the complex I subunit 2 family. In terms of assembly, NDH is composed of at least 16 different subunits, 5 of which are encoded in the nucleus.

Its subcellular location is the plastid. It is found in the chloroplast thylakoid membrane. It carries out the reaction a plastoquinone + NADH + (n+1) H(+)(in) = a plastoquinol + NAD(+) + n H(+)(out). It catalyses the reaction a plastoquinone + NADPH + (n+1) H(+)(in) = a plastoquinol + NADP(+) + n H(+)(out). NDH shuttles electrons from NAD(P)H:plastoquinone, via FMN and iron-sulfur (Fe-S) centers, to quinones in the photosynthetic chain and possibly in a chloroplast respiratory chain. The immediate electron acceptor for the enzyme in this species is believed to be plastoquinone. Couples the redox reaction to proton translocation, and thus conserves the redox energy in a proton gradient. The sequence is that of NAD(P)H-quinone oxidoreductase subunit 2 A, chloroplastic from Illicium oligandrum (Star anise).